Reading from the N-terminus, the 571-residue chain is Methionine--tRNA ligase (571 aa).

Residues 10 to 20 (PYVNAVPHLGN) carry the 'HIGH' region motif. Residues Cys143, Cys146, Cys156, and Cys159 each contribute to the Zn(2+) site. Positions 333–337 (KFSKS) match the 'KMSKS' region motif. Lys336 contributes to the ATP binding site.

This sequence belongs to the class-I aminoacyl-tRNA synthetase family. MetG type 1 subfamily. It depends on Zn(2+) as a cofactor.

Its subcellular location is the cytoplasm. The catalysed reaction is tRNA(Met) + L-methionine + ATP = L-methionyl-tRNA(Met) + AMP + diphosphate. In terms of biological role, is required not only for elongation of protein synthesis but also for the initiation of all mRNA translation through initiator tRNA(fMet) aminoacylation. In Sulfurisphaera tokodaii (strain DSM 16993 / JCM 10545 / NBRC 100140 / 7) (Sulfolobus tokodaii), this protein is Methionine--tRNA ligase.